The chain runs to 165 residues: Probable chemoreceptor glutamine deamidase CheD (165 aa).

Belongs to the CheD family.

The enzyme catalyses L-glutaminyl-[protein] + H2O = L-glutamyl-[protein] + NH4(+). Its function is as follows. Probably deamidates glutamine residues to glutamate on methyl-accepting chemotaxis receptors (MCPs), playing an important role in chemotaxis. The polypeptide is Probable chemoreceptor glutamine deamidase CheD (Geobacillus kaustophilus (strain HTA426)).